The following is a 221-amino-acid chain: Putative 3-methyladenine DNA glycosylase (221 aa).

Belongs to the DNA glycosylase MPG family.

The chain is Putative 3-methyladenine DNA glycosylase from Herpetosiphon aurantiacus (strain ATCC 23779 / DSM 785 / 114-95).